A 199-amino-acid chain; its full sequence is Peroxiredoxin-1 (199 aa).

Positions 6–165 constitute a Thioredoxin domain; sequence AYIGKLAPDF…TLRLVQAFQF (160 aa). Cys-52 acts as the Cysteine sulfenic acid (-SOH) intermediate in catalysis.

Belongs to the peroxiredoxin family. AhpC/Prx1 subfamily. Homodimer; disulfide-linked, upon oxidation. 5 homodimers assemble to form a ring-like decamer. Interacts with GDPD5; forms a mixed-disulfide with GDPD5. Interacts with SESN1 and SESN2. Interacts with FAM107A. In terms of processing, the enzyme can be inactivated by further oxidation of the cysteine sulfenic acid (C(P)-SOH) to sulphinic acid (C(P)-SO2H) instead of its condensation to a disulfide bond. It can be reactivated by forming a transient disulfide bond with sulfiredoxin SRXN1, which reduces the cysteine sulfinic acid in an ATP- and Mg-dependent manner.

It localises to the cytoplasm. It catalyses the reaction a hydroperoxide + [thioredoxin]-dithiol = an alcohol + [thioredoxin]-disulfide + H2O. Its function is as follows. Thiol-specific peroxidase that catalyzes the reduction of hydrogen peroxide and organic hydroperoxides to water and alcohols, respectively. Plays a role in cell protection against oxidative stress by detoxifying peroxides and as sensor of hydrogen peroxide-mediated signaling events. Might participate in the signaling cascades of growth factors and tumor necrosis factor-alpha by regulating the intracellular concentrations of H(2)O(2). Reduces an intramolecular disulfide bond in GDPD5 that gates the ability to GDPD5 to drive postmitotic motor neuron differentiation. This chain is Peroxiredoxin-1 (PRDX1), found in Gekko japonicus (Schlegel's Japanese gecko).